A 363-amino-acid polypeptide reads, in one-letter code: Peptide-N(4)-(N-acetyl-beta-glucosaminyl)asparagine amidase (363 aa).

Zn(2+) is bound by residues Cys129, Cys132, Cys165, and Cys168. The active-site Nucleophile is the Cys191. Catalysis depends on residues His218 and Asp235. Glu238 lines the substrate pocket. The disordered stretch occupies residues 325-363 (RGKTQETKSESVSAASKSSNRGRESGSADWKAQRGEDGK). Positions 334 to 343 (ESVSAASKSS) are enriched in low complexity. A compositionally biased stretch (basic and acidic residues) spans 345–363 (RGRESGSADWKAQRGEDGK).

This sequence belongs to the transglutaminase-like superfamily. PNGase family. As to quaternary structure, interacts with RAD23 subunit of 26S proteasome. Zn(2+) serves as cofactor.

The protein resides in the cytoplasm. The protein localises to the nucleus. The catalysed reaction is Hydrolysis of an N(4)-(acetyl-beta-D-glucosaminyl)asparagine residue in which the glucosamine residue may be further glycosylated, to yield a (substituted) N-acetyl-beta-D-glucosaminylamine and a peptide containing an aspartate residue.. With respect to regulation, inhibited by Z-VAD-fmk, a well-known caspase inhibitor. Also inhibited by Man9GlcNAc2-iodoacetoamide. Both molecules inhibit enzyme activity through covalent binding of the carbohydrate to the single Cys-191 residue. Functionally, specifically deglycosylates the denatured form of N-linked glycoproteins in the cytoplasm and assists their proteasome-mediated degradation. Cleaves the beta-aspartyl-glucosamine (GlcNAc) of the glycan and the amide side chain of Asn, converting Asn to Asp. Prefers proteins containing high-mannose over those bearing complex type oligosaccharides. Can recognize misfolded proteins in the endoplasmic reticulum that are exported to the cytosol to be destroyed and deglycosylate them, while it has no activity toward native proteins. Deglycosylation is a prerequisite for subsequent proteasome-mediated degradation of some, but not all, misfolded glycoproteins. Involved in the formation of free oligosaccharide in cytosol. This is Peptide-N(4)-(N-acetyl-beta-glucosaminyl)asparagine amidase (PNG1) from Saccharomyces cerevisiae (strain ATCC 204508 / S288c) (Baker's yeast).